The chain runs to 357 residues: Uroporphyrinogen decarboxylase (357 aa).

Residues 30–34 (RQAGR), Asp-79, Tyr-154, Ser-209, and His-336 contribute to the substrate site.

This sequence belongs to the uroporphyrinogen decarboxylase family. As to quaternary structure, homodimer.

The protein resides in the cytoplasm. The enzyme catalyses uroporphyrinogen III + 4 H(+) = coproporphyrinogen III + 4 CO2. It functions in the pathway porphyrin-containing compound metabolism; protoporphyrin-IX biosynthesis; coproporphyrinogen-III from 5-aminolevulinate: step 4/4. Catalyzes the decarboxylation of four acetate groups of uroporphyrinogen-III to yield coproporphyrinogen-III. In Mycobacterium leprae (strain Br4923), this protein is Uroporphyrinogen decarboxylase.